We begin with the raw amino-acid sequence, 320 residues long: Zinc finger protein-like 1 (320 aa).

Residues 1 to 43 form a B box-type; degenerate zinc finger; that stretch reads MGLCKCPKRKVTNLFCFEHRVNVCEHCLVANHAKCIVQSYLQW. At 1-274 the chain is on the cytoplasmic side; it reads MGLCKCPKRK…KSRPASSMQR (274 aa). Residues 53–101 form an RING-type; degenerate zinc finger; that stretch reads CRLCNTLLSSKETARLVCYDLFHWSCLNDLATQQPPNTAPAGYRCPSCQ. Residues 275-295 traverse the membrane as a helical segment; it reads FLVILIIGVLGFLTLILLMSK. The Lumenal portion of the chain corresponds to 296–320; the sequence is LGRASADNDPNLDPLLNPHIHVGKE.

It belongs to the ZFPL1 family.

It localises to the golgi apparatus. Its subcellular location is the cis-Golgi network membrane. In terms of biological role, required for cis-Golgi integrity and efficient ER to Golgi transport. The sequence is that of Zinc finger protein-like 1 (zfpl1) from Xenopus laevis (African clawed frog).